The sequence spans 243 residues: E3 ubiquitin-protein ligase RMA3 (243 aa).

Residues 44 to 92 (CNICLDTAHDPVVTLCGHLFCWPCIYKWLHVQLSSVSVDQHQNNCPVCK) form an RING-type zinc finger. The interval 110-135 (SPSSTFGSKKQDALSTDIPRRPAPSA) is disordered. Residues 223–243 (KSLNRVSIFFLCCIILCLLLF) form a helical; Anchor for type IV membrane protein membrane-spanning segment.

In terms of tissue distribution, ubiquitous. Highly expressed in roots.

It localises to the endoplasmic reticulum membrane. The enzyme catalyses S-ubiquitinyl-[E2 ubiquitin-conjugating enzyme]-L-cysteine + [acceptor protein]-L-lysine = [E2 ubiquitin-conjugating enzyme]-L-cysteine + N(6)-ubiquitinyl-[acceptor protein]-L-lysine.. The protein operates within protein modification; protein ubiquitination. In terms of biological role, E3 ubiquitin-protein ligase. The chain is E3 ubiquitin-protein ligase RMA3 (RMA3) from Arabidopsis thaliana (Mouse-ear cress).